Here is a 287-residue protein sequence, read N- to C-terminus: ATP phosphoribosyltransferase (287 aa).

It belongs to the ATP phosphoribosyltransferase family. Long subfamily. Equilibrium between an active dimeric form, an inactive hexameric form and higher aggregates. Interconversion between the various forms is largely reversible and is influenced by the natural substrates and inhibitors of the enzyme. Requires Mg(2+) as cofactor.

It localises to the cytoplasm. The catalysed reaction is 1-(5-phospho-beta-D-ribosyl)-ATP + diphosphate = 5-phospho-alpha-D-ribose 1-diphosphate + ATP. Its pathway is amino-acid biosynthesis; L-histidine biosynthesis; L-histidine from 5-phospho-alpha-D-ribose 1-diphosphate: step 1/9. Feedback inhibited by histidine. In terms of biological role, catalyzes the condensation of ATP and 5-phosphoribose 1-diphosphate to form N'-(5'-phosphoribosyl)-ATP (PR-ATP). Has a crucial role in the pathway because the rate of histidine biosynthesis seems to be controlled primarily by regulation of HisG enzymatic activity. This chain is ATP phosphoribosyltransferase (hisG), found in Mycobacterium leprae (strain TN).